The primary structure comprises 204 residues: Octanoyltransferase (204 aa).

Positions 30 to 204 (CETPDEIWLL…QSFINQLTDV (175 aa)) constitute a BPL/LPL catalytic domain. Residues 69 to 76 (RGGQITYH), 136 to 138 (SLG), and 149 to 151 (GIA) each bind substrate. Cys-167 (acyl-thioester intermediate) is an active-site residue.

Belongs to the LipB family.

It localises to the cytoplasm. The enzyme catalyses octanoyl-[ACP] + L-lysyl-[protein] = N(6)-octanoyl-L-lysyl-[protein] + holo-[ACP] + H(+). It participates in protein modification; protein lipoylation via endogenous pathway; protein N(6)-(lipoyl)lysine from octanoyl-[acyl-carrier-protein]: step 1/2. Catalyzes the transfer of endogenously produced octanoic acid from octanoyl-acyl-carrier-protein onto the lipoyl domains of lipoate-dependent enzymes. Lipoyl-ACP can also act as a substrate although octanoyl-ACP is likely to be the physiological substrate. This is Octanoyltransferase from Nitrosomonas europaea (strain ATCC 19718 / CIP 103999 / KCTC 2705 / NBRC 14298).